A 400-amino-acid polypeptide reads, in one-letter code: Probable tRNA sulfurtransferase (400 aa).

One can recognise a THUMP domain in the interval 60-164; sequence EPIIEKLKNV…KEATYITSGT (105 aa). Residues 182-183, 207-208, Arg264, Gly286, and Gln295 contribute to the ATP site; these read LL and HF.

This sequence belongs to the ThiI family.

The protein resides in the cytoplasm. The catalysed reaction is [ThiI sulfur-carrier protein]-S-sulfanyl-L-cysteine + a uridine in tRNA + 2 reduced [2Fe-2S]-[ferredoxin] + ATP + H(+) = [ThiI sulfur-carrier protein]-L-cysteine + a 4-thiouridine in tRNA + 2 oxidized [2Fe-2S]-[ferredoxin] + AMP + diphosphate. It carries out the reaction [ThiS sulfur-carrier protein]-C-terminal Gly-Gly-AMP + S-sulfanyl-L-cysteinyl-[cysteine desulfurase] + AH2 = [ThiS sulfur-carrier protein]-C-terminal-Gly-aminoethanethioate + L-cysteinyl-[cysteine desulfurase] + A + AMP + 2 H(+). Its pathway is cofactor biosynthesis; thiamine diphosphate biosynthesis. Catalyzes the ATP-dependent transfer of a sulfur to tRNA to produce 4-thiouridine in position 8 of tRNAs, which functions as a near-UV photosensor. Also catalyzes the transfer of sulfur to the sulfur carrier protein ThiS, forming ThiS-thiocarboxylate. This is a step in the synthesis of thiazole, in the thiamine biosynthesis pathway. The sulfur is donated as persulfide by IscS. The polypeptide is Probable tRNA sulfurtransferase (Oceanobacillus iheyensis (strain DSM 14371 / CIP 107618 / JCM 11309 / KCTC 3954 / HTE831)).